The following is a 284-amino-acid chain: Homeobox protein Hox-D13 (284 aa).

Residues 217–276 (GRKKRVPYTKTQLKELEREYATNKFITKEKRRRISTATNLTERQVTIWFQNRRVKEKKVV) constitute a DNA-binding region (homeobox).

The protein belongs to the Abd-B homeobox family.

It is found in the nucleus. Sequence-specific transcription factor that binds gene promoters and activates their transcription. Part of a developmental regulatory system that provides cells with specific positional identities on the anterior-posterior axis. The sequence is that of Homeobox protein Hox-D13 (HOXD13) from Heterodontus francisci (Horn shark).